The sequence spans 273 residues: Glutamate racemase (273 aa).

Residues 7-8 (DS) and 39-40 (YG) each bind substrate. Cys70 functions as the Proton donor/acceptor in the catalytic mechanism. 71–72 (NT) contacts substrate. The Proton donor/acceptor role is filled by Cys194. 195–196 (TH) contributes to the substrate binding site.

Belongs to the aspartate/glutamate racemases family.

The enzyme catalyses L-glutamate = D-glutamate. It functions in the pathway cell wall biogenesis; peptidoglycan biosynthesis. Provides the (R)-glutamate required for cell wall biosynthesis. This chain is Glutamate racemase, found in Dinoroseobacter shibae (strain DSM 16493 / NCIMB 14021 / DFL 12).